The sequence spans 591 residues: CDK5RAP3 protein homolog (591 aa).

Residues 232 to 250 (RAGAPSSAKGPASSASAPP) show a composition bias toward low complexity. 2 disordered regions span residues 232 to 252 (RAGAPSSAKGPASSASAPPAL) and 269 to 303 (TAPPEAESGAAGAGASGQGGGIEIDWGDSGGDAGG). Residues 279–303 (AGAGASGQGGGIEIDWGDSGGDAGG) show a composition bias toward gly residues. 3 consecutive short sequence motifs (shuffled ATG8-binding motif) follow at residues 311–314 (IDWD), 334–337 (INWD), and 369–372 (IDWD). Over residues 386–401 (NNRAGDVAEGEAAASL) the composition is skewed to low complexity. Residues 386–416 (NNRAGDVAEGEAAASLSGGGGGGASSGDPDD) are disordered.

Belongs to the CDK5RAP3 family. As to quaternary structure, substrate adapter component of the UFM1 ribosome E3 ligase (UREL) complex. Interacts with ATG8 family proteins.

Functionally, substrate adapter of E3 ligase complexes mediating ufmylation, the covalent attachment of the ubiquitin-like modifier UFM1 to substrate proteins, and which is involved in various processes, such as ribosome recycling and reticulophagy (also called ER-phagy). The polypeptide is CDK5RAP3 protein homolog (Chlamydomonas reinhardtii (Chlamydomonas smithii)).